A 344-amino-acid polypeptide reads, in one-letter code: Putative F-box/kelch-repeat protein At1g19930 (344 aa).

One can recognise an F-box domain in the interval 8–54 (TELIFSLPNDLLVNILARVSRLDYPILSLVSKRFSSVLTLPELYQTR). Kelch repeat units follow at residues 122–168 (NIYN…LLDG), 170–195 (IYVTGGCRLTFHGCGDQTDNVVVDGK), 196–241 (LHSC…YYYY), and 243–276 (NENIKWYDTKVRSWRTLNGLKTLPRFARYANVRL).

This is Putative F-box/kelch-repeat protein At1g19930 from Arabidopsis thaliana (Mouse-ear cress).